The sequence spans 403 residues: MSKKVEVNKVVVAYSGGLDTSVIIPWLKENYNCEVIAFVADVGQGEEELEGIEAKAIASGATECYVVDLKEEMVSEYIFPTLKTGALYEGKYLLGTSMARPIIAKAQVEVARNVGADALCHGCTGKGNDQIRFEGAFAALAPDLHVIAPWREWDLVSREECLDYLAERNIPCTASLTKIYSRDANAWHISTEGGVLEETWNAPNDDCWAWTVDPEQAPNESETISLKVEKGAVVAVDGKAMTPYEVVVYLNEKGAKHGVGRIDIVENRLVGMKSRGCYETPGGTIINEALRAVEQLVLDKTSFEFREELGIKASHLVYDGRWFTPLCKSILAASEELAKDVNGEVVIKLYKGHATVIQKRSDNSLYSEEFATFGADEVYDQSHAEGFIRLYSLSSRIRALNSK.

ATP contacts are provided by residues 13 to 21 and Ala40; that span reads AYSGGLDTS. Residues Tyr92 and Ser97 each contribute to the L-citrulline site. Position 122 (Gly122) interacts with ATP. Thr124, Asn128, and Asp129 together coordinate L-aspartate. L-citrulline is bound at residue Asn128. L-citrulline is bound by residues Arg132, Ser181, Ser190, Glu266, and Tyr278.

Belongs to the argininosuccinate synthase family. Type 1 subfamily. As to quaternary structure, homotetramer.

The protein resides in the cytoplasm. The enzyme catalyses L-citrulline + L-aspartate + ATP = 2-(N(omega)-L-arginino)succinate + AMP + diphosphate + H(+). It participates in amino-acid biosynthesis; L-arginine biosynthesis; L-arginine from L-ornithine and carbamoyl phosphate: step 2/3. The polypeptide is Argininosuccinate synthase (Aliivibrio fischeri (strain ATCC 700601 / ES114) (Vibrio fischeri)).